Reading from the N-terminus, the 398-residue chain is MDAGAQPPDTEMAEAGGGQQPPAAAAAAGAGAGAGMMENIQATLSHGGRFIQYNIFGNVFEVTAKYKPPILPIGKGAYGIVCSALNSETGEQVAIKKIANAFDNKIDAKRTLREIKLLRHMDHENIVAIRDIIPPPQRNSFNDVYIAYELMDTDLHQIIRSNQALSEEHCQYFLYQILRGLKYIHSANVLHRDLKPSNLLLNANCDLKICDFGLARTTSETDFMTEYVVTRWYRAPELLLNSSEYTAAIDVWSVGCIFMELMDRKPLFPGRDHVHQLRLLMELIGTPNEADLDFVNENARRYIRQLPRHARQSFPEKFPHVHPLAIDLVEKMLTFDPRQRITVEGALAHPYLASLHDISDEPVCSSPFSFDFEQHALSEEQMKDLIYQEGLAFNPDYQ.

The interval 1–26 (MDAGAQPPDTEMAEAGGGQQPPAAAA) is disordered. Residues 67–352 (KPPILPIGKG…VEGALAHPYL (286 aa)) form the Protein kinase domain. Residues 73 to 81 (IGKGAYGIV) and lysine 96 contribute to the ATP site. Aspartate 193 functions as the Proton acceptor in the catalytic mechanism. The residue at position 225 (threonine 225) is a Phosphothreonine. The short motif at 225–227 (TEY) is the TXY element. Tyrosine 227 carries the post-translational modification Phosphotyrosine.

This sequence belongs to the protein kinase superfamily. CMGC Ser/Thr protein kinase family. MAP kinase subfamily. May interact with RAC1. In terms of processing, dually phosphorylated on Thr-225 and Tyr-227, which activates the enzyme.

It carries out the reaction L-seryl-[protein] + ATP = O-phospho-L-seryl-[protein] + ADP + H(+). It catalyses the reaction L-threonyl-[protein] + ATP = O-phospho-L-threonyl-[protein] + ADP + H(+). With respect to regulation, activated by threonine and tyrosine phosphorylation. Activated in response to sphingolipid elicitor (SE). Involved in sphingolipid elicitor (SE)-dependent defense signaling pathway. Acts downstream of heterotrimeric G protein alpha subunit and small GTPase RAC1. May regulate the expression of various genes involved in biotic and abiotic stress response. Involved in an abscisic acid signaling pathway that regulates the activities of antioxidant enzymes and the production of hydrogen peroxide. Acts downstream of CCAMK. This chain is Mitogen-activated protein kinase 1 (MPK1), found in Oryza sativa subsp. japonica (Rice).